The sequence spans 182 residues: MIKEIINVVHGTFTQLRSLVMIFGHAFRKRDTLQYPEEPVYLPPRYRGRIVLTRDPDGEERCVACNLCAVACPVGCISLQKAETEDGRWYPEFFRINFSRCIFCGLCEEACPTTAIQLTPDFEMGEFKRQDLVYEKHDLLISGPGKNPDYNYYRVAGMAIAGKPKGAAQNEAEPINVKSLLP.

4Fe-4S ferredoxin-type domains follow at residues 52–82 and 92–121; these read LTRD…LQKA and EFFR…LTPD. Residues cysteine 62, cysteine 65, cysteine 68, cysteine 72, cysteine 101, cysteine 104, cysteine 107, and cysteine 111 each contribute to the [4Fe-4S] cluster site.

This sequence belongs to the complex I 23 kDa subunit family. NDH-1 is composed of 13 different subunits. Subunits NuoA, H, J, K, L, M, N constitute the membrane sector of the complex. Requires [4Fe-4S] cluster as cofactor.

It is found in the cell inner membrane. The enzyme catalyses a quinone + NADH + 5 H(+)(in) = a quinol + NAD(+) + 4 H(+)(out). Its function is as follows. NDH-1 shuttles electrons from NADH, via FMN and iron-sulfur (Fe-S) centers, to quinones in the respiratory chain. The immediate electron acceptor for the enzyme in this species is believed to be ubiquinone. Couples the redox reaction to proton translocation (for every two electrons transferred, four hydrogen ions are translocated across the cytoplasmic membrane), and thus conserves the redox energy in a proton gradient. The polypeptide is NADH-quinone oxidoreductase subunit I (Pseudomonas aeruginosa (strain LESB58)).